The chain runs to 348 residues: Uroporphyrinogen decarboxylase (348 aa).

Substrate contacts are provided by residues 28-32, aspartate 78, tyrosine 154, threonine 209, and histidine 325; that span reads RQAGR.

The protein belongs to the uroporphyrinogen decarboxylase family. In terms of assembly, homodimer.

Its subcellular location is the cytoplasm. The enzyme catalyses uroporphyrinogen III + 4 H(+) = coproporphyrinogen III + 4 CO2. Its pathway is porphyrin-containing compound metabolism; protoporphyrin-IX biosynthesis; coproporphyrinogen-III from 5-aminolevulinate: step 4/4. Its function is as follows. Catalyzes the decarboxylation of four acetate groups of uroporphyrinogen-III to yield coproporphyrinogen-III. The chain is Uroporphyrinogen decarboxylase from Rhodopseudomonas palustris (strain BisB5).